We begin with the raw amino-acid sequence, 1742 residues long: Meiosis regulator and mRNA stability factor 1 (1742 aa).

S65 is subject to Phosphoserine. In terms of domain architecture, NYN spans 351-488 (IGVFWDIENC…ALLHHANELI (138 aa)). Disordered regions lie at residues 620 to 642 (PSSA…TRNA) and 655 to 721 (SKTG…KEKE). A compositionally biased stretch (polar residues) spans 631–642 (SQANSGSATRNA). A compositionally biased stretch (low complexity) spans 673–689 (APPHRSSSAAAPAPKAP). Y696 bears the Phosphotyrosine mark. S757 is modified (phosphoserine). An RRM domain is found at 788-867 (VDVQISNLDY…KKILVSLATG (80 aa)). HTH OST-type domains follow at residues 872-946 (SLSL…SPLG) and 1000-1077 (SLKT…HNKP). Phosphoserine is present on residues S1089 and S1091. HTH OST-type domains are found at residues 1097–1171 (QLIQ…LTHR), 1173–1247 (QVKR…CIPR), 1257–1332 (RTKQ…TEVE), 1333–1408 (RFKA…INRK), 1409–1484 (SLRA…CVKL), and 1486–1560 (SLYL…LKND). S1571 bears the Phosphoserine mark. A disordered region spans residues 1678-1729 (IRNENLPPDPSSPGVSAAVPAPPSPSSETPESLLSKDPTESPAKKQPKNRVK). Residues 1703 to 1712 (SSETPESLLS) show a composition bias toward low complexity.

In terms of assembly, interacts with LIMK2.

It is found in the peroxisome. Its function is as follows. Essential regulator of oogenesis required for female meiotic progression to repress transposable elements and preventing their mobilization, which is essential for the germline integrity. Probably acts via some RNA metabolic process, equivalent to the piRNA system in males, which mediates the repression of transposable elements during meiosis by forming complexes composed of RNAs and governs the methylation and subsequent repression of transposons. Also required to protect from DNA double-strand breaks. This chain is Meiosis regulator and mRNA stability factor 1, found in Bos taurus (Bovine).